We begin with the raw amino-acid sequence, 205 residues long: Putative 3-methyladenine DNA glycosylase (205 aa).

It belongs to the DNA glycosylase MPG family.

The sequence is that of Putative 3-methyladenine DNA glycosylase from Bacillus cereus (strain ATCC 14579 / DSM 31 / CCUG 7414 / JCM 2152 / NBRC 15305 / NCIMB 9373 / NCTC 2599 / NRRL B-3711).